A 127-amino-acid polypeptide reads, in one-letter code: Holo-[acyl-carrier-protein] synthase (127 aa).

Residues D8 and E57 each coordinate Mg(2+).

This sequence belongs to the P-Pant transferase superfamily. AcpS family. Mg(2+) is required as a cofactor.

The protein resides in the cytoplasm. The catalysed reaction is apo-[ACP] + CoA = holo-[ACP] + adenosine 3',5'-bisphosphate + H(+). In terms of biological role, transfers the 4'-phosphopantetheine moiety from coenzyme A to a Ser of acyl-carrier-protein. The polypeptide is Holo-[acyl-carrier-protein] synthase (Ruthia magnifica subsp. Calyptogena magnifica).